Here is a 322-residue protein sequence, read N- to C-terminus: Putative pyruvyl transferase EpsO (322 aa).

Belongs to the polysaccharide pyruvyl transferase family.

In terms of biological role, may be involved in the production of the exopolysaccharide (EPS) component of the extracellular matrix during biofilm formation. EPS is responsible for the adhesion of chains of cells into bundles. The polypeptide is Putative pyruvyl transferase EpsO (epsO) (Bacillus subtilis (strain 168)).